We begin with the raw amino-acid sequence, 341 residues long: S-adenosylmethionine:tRNA ribosyltransferase-isomerase (341 aa).

It belongs to the QueA family. As to quaternary structure, monomer.

It is found in the cytoplasm. It catalyses the reaction 7-aminomethyl-7-carbaguanosine(34) in tRNA + S-adenosyl-L-methionine = epoxyqueuosine(34) in tRNA + adenine + L-methionine + 2 H(+). It functions in the pathway tRNA modification; tRNA-queuosine biosynthesis. In terms of biological role, transfers and isomerizes the ribose moiety from AdoMet to the 7-aminomethyl group of 7-deazaguanine (preQ1-tRNA) to give epoxyqueuosine (oQ-tRNA). The sequence is that of S-adenosylmethionine:tRNA ribosyltransferase-isomerase from Clostridium beijerinckii (strain ATCC 51743 / NCIMB 8052) (Clostridium acetobutylicum).